The chain runs to 151 residues: Large ribosomal subunit protein eL8 (151 aa).

This sequence belongs to the eukaryotic ribosomal protein eL8 family. In terms of assembly, part of the 50S ribosomal subunit. Probably part of the RNase P complex.

The protein localises to the cytoplasm. Its function is as follows. Multifunctional RNA-binding protein that recognizes the K-turn motif in ribosomal RNA, the RNA component of RNase P, box H/ACA, box C/D and box C'/D' sRNAs. The polypeptide is Large ribosomal subunit protein eL8 (Pyrobaculum aerophilum (strain ATCC 51768 / DSM 7523 / JCM 9630 / CIP 104966 / NBRC 100827 / IM2)).